Here is a 309-residue protein sequence, read N- to C-terminus: Glutaminase (309 aa).

Substrate-binding residues include serine 65, asparagine 117, glutamate 162, asparagine 169, tyrosine 193, tyrosine 245, and valine 263.

Belongs to the glutaminase family. In terms of assembly, homotetramer.

It catalyses the reaction L-glutamine + H2O = L-glutamate + NH4(+). This is Glutaminase from Clostridioides difficile (strain 630) (Peptoclostridium difficile).